A 454-amino-acid polypeptide reads, in one-letter code: tRNA modification GTPase MnmE (454 aa).

(6S)-5-formyl-5,6,7,8-tetrahydrofolate is bound by residues R23, E80, and K120. The TrmE-type G domain occupies 216 to 377 (GMKVVIAGRP…LRNHLKQSMG (162 aa)). N226 provides a ligand contact to K(+). GTP contacts are provided by residues 226–231 (NAGKSS), 245–251 (TDIAGTT), 270–273 (DTAG), 335–338 (NKAD), and 358–360 (SAR). S230 contacts Mg(2+). Positions 245, 247, and 250 each coordinate K(+). T251 contributes to the Mg(2+) binding site. K454 is a (6S)-5-formyl-5,6,7,8-tetrahydrofolate binding site.

Belongs to the TRAFAC class TrmE-Era-EngA-EngB-Septin-like GTPase superfamily. TrmE GTPase family. In terms of assembly, homodimer. Heterotetramer of two MnmE and two MnmG subunits. Requires K(+) as cofactor.

It is found in the cytoplasm. Exhibits a very high intrinsic GTPase hydrolysis rate. Involved in the addition of a carboxymethylaminomethyl (cmnm) group at the wobble position (U34) of certain tRNAs, forming tRNA-cmnm(5)s(2)U34. The protein is tRNA modification GTPase MnmE of Salmonella arizonae (strain ATCC BAA-731 / CDC346-86 / RSK2980).